The chain runs to 115 residues: C-type natriuretic peptide prohormone (115 aa).

The disordered stretch occupies residues 24–49; sequence PSDELNNEAEEMSPAASLPELNADQS. Cysteine 99 and cysteine 115 are joined by a disulfide.

It belongs to the natriuretic peptide family. As to expression, CNP-115 is differentially processed to produce CNP-38 and CNP-39 in the heart and CNP-22 in the brain.

It localises to the secreted. Its function is as follows. Hormone which may be vasoactive and natriuretic. Has a cGMP-stimulating activity. The protein is C-type natriuretic peptide prohormone of Scyliorhinus canicula (Small-spotted catshark).